A 388-amino-acid polypeptide reads, in one-letter code: Succinate--CoA ligase [ADP-forming] subunit beta (388 aa).

In terms of domain architecture, ATP-grasp spans 9–244; the sequence is KQLFARYGLP…QSQEDPREAQ (236 aa). Residues lysine 46, 53–55, glutamate 99, threonine 102, and glutamate 107 contribute to the ATP site; that span reads GRG. Residues asparagine 199 and aspartate 213 each contribute to the Mg(2+) site. Substrate-binding positions include asparagine 264 and 321–323; that span reads GIV.

This sequence belongs to the succinate/malate CoA ligase beta subunit family. In terms of assembly, heterotetramer of two alpha and two beta subunits. Mg(2+) serves as cofactor.

It catalyses the reaction succinate + ATP + CoA = succinyl-CoA + ADP + phosphate. The catalysed reaction is GTP + succinate + CoA = succinyl-CoA + GDP + phosphate. It participates in carbohydrate metabolism; tricarboxylic acid cycle; succinate from succinyl-CoA (ligase route): step 1/1. Its function is as follows. Succinyl-CoA synthetase functions in the citric acid cycle (TCA), coupling the hydrolysis of succinyl-CoA to the synthesis of either ATP or GTP and thus represents the only step of substrate-level phosphorylation in the TCA. The beta subunit provides nucleotide specificity of the enzyme and binds the substrate succinate, while the binding sites for coenzyme A and phosphate are found in the alpha subunit. The polypeptide is Succinate--CoA ligase [ADP-forming] subunit beta (Salmonella arizonae (strain ATCC BAA-731 / CDC346-86 / RSK2980)).